The following is a 248-amino-acid chain: Aspartate/glutamate leucyltransferase (248 aa).

Belongs to the R-transferase family. Bpt subfamily.

The protein localises to the cytoplasm. It carries out the reaction N-terminal L-glutamyl-[protein] + L-leucyl-tRNA(Leu) = N-terminal L-leucyl-L-glutamyl-[protein] + tRNA(Leu) + H(+). It catalyses the reaction N-terminal L-aspartyl-[protein] + L-leucyl-tRNA(Leu) = N-terminal L-leucyl-L-aspartyl-[protein] + tRNA(Leu) + H(+). In terms of biological role, functions in the N-end rule pathway of protein degradation where it conjugates Leu from its aminoacyl-tRNA to the N-termini of proteins containing an N-terminal aspartate or glutamate. The sequence is that of Aspartate/glutamate leucyltransferase from Methylobacillus flagellatus (strain ATCC 51484 / DSM 6875 / VKM B-1610 / KT).